The primary structure comprises 122 residues: Small ribosomal subunit protein uS13 (122 aa).

A disordered region spans residues 93-122 (RRSLPVRGQRTHTNARTRKGPAKPIAGKKK).

This sequence belongs to the universal ribosomal protein uS13 family. In terms of assembly, part of the 30S ribosomal subunit. Forms a loose heterodimer with protein S19. Forms two bridges to the 50S subunit in the 70S ribosome.

In terms of biological role, located at the top of the head of the 30S subunit, it contacts several helices of the 16S rRNA. In the 70S ribosome it contacts the 23S rRNA (bridge B1a) and protein L5 of the 50S subunit (bridge B1b), connecting the 2 subunits; these bridges are implicated in subunit movement. Contacts the tRNAs in the A and P-sites. The polypeptide is Small ribosomal subunit protein uS13 (Chelativorans sp. (strain BNC1)).